Consider the following 192-residue polypeptide: Glycerol-3-phosphate acyltransferase (192 aa).

The next 5 membrane-spanning stretches (helical) occupy residues 3–23, 51–71, 80–100, 112–132, and 149–169; these read ALFLVIFAYLLGSITFGEVIA, YGVLVFFLDFLKGFIPALIAV, VLTFTGLASVLGHMYPVFFGF, VVFAVSPSVALFSFLVWLGIF, and AFLFLFVAGYPVNVLFMAIVI.

Belongs to the PlsY family. Probably interacts with PlsX.

The protein localises to the cell inner membrane. The enzyme catalyses an acyl phosphate + sn-glycerol 3-phosphate = a 1-acyl-sn-glycero-3-phosphate + phosphate. Its pathway is lipid metabolism; phospholipid metabolism. In terms of biological role, catalyzes the transfer of an acyl group from acyl-phosphate (acyl-PO(4)) to glycerol-3-phosphate (G3P) to form lysophosphatidic acid (LPA). This enzyme utilizes acyl-phosphate as fatty acyl donor, but not acyl-CoA or acyl-ACP. The protein is Glycerol-3-phosphate acyltransferase of Aquifex aeolicus (strain VF5).